Here is a 330-residue protein sequence, read N- to C-terminus: Low-redox potential peroxidase (330 aa).

An N-terminal signal peptide occupies residues 1–24 (MRSSTHIFVSFVVYCGVFVTSAIA). Asparagine 27 carries N-linked (GlcNAc...) asparagine glycosylation. 3 cysteine pairs are disulfide-bonded: cysteine 34-cysteine 285, cysteine 54-cysteine 123, and cysteine 251-cysteine 314. Positions 69, 71, and 73 each coordinate Ca(2+). Residue histidine 178 participates in heme b binding. Serine 179, aspartate 196, threonine 198, and aspartate 203 together coordinate Ca(2+).

It belongs to the peroxidase family. Ligninase subfamily. It depends on Ca(2+) as a cofactor. Heme b is required as a cofactor.

It localises to the secreted. It carries out the reaction 2 a phenolic donor + H2O2 = 2 a phenolic radical donor + 2 H2O. Can oxidize the lignin redox mediator veratryl alcohol to veratryl aldehyde. May be involved in oxidation of lignocellulose substrates. The sequence is that of Low-redox potential peroxidase (LnP) from Taiwanofungus camphoratus (Poroid brown-rot fungus).